A 37-amino-acid polypeptide reads, in one-letter code: Large ribosomal subunit protein bL36B (37 aa).

The protein belongs to the bacterial ribosomal protein bL36 family.

This Paenarthrobacter aurescens (strain TC1) protein is Large ribosomal subunit protein bL36B.